The primary structure comprises 95 residues: Small ribosomal subunit protein bS20 (95 aa).

It belongs to the bacterial ribosomal protein bS20 family.

Its function is as follows. Binds directly to 16S ribosomal RNA. The chain is Small ribosomal subunit protein bS20 from Fervidobacterium nodosum (strain ATCC 35602 / DSM 5306 / Rt17-B1).